The primary structure comprises 317 residues: Transcriptional regulator LsrR (317 aa).

The segment at residues 33–56 is a DNA-binding region (H-T-H motif); it reads QSEISDRLGLTRLKVSRLLEKGHQ.

Belongs to the SorC transcriptional regulatory family.

The protein localises to the cytoplasm. Inactivated by phosphorylated autoinducer-2 (phospho-AI-2). Phospho-AI-2 acts by binding to LsrR, which is then unable to bind to the promoter regions, allowing the transcription of the target genes. In terms of biological role, transcriptional regulator that represses the expression of the lsr operon in the absence of the quorum-sensing signaling molecule autoinducer 2 (AI-2). It also represses the expression of the lsrRK operon. Acts by binding directly to the lsrA and lsrR promoter regions. In the presence of phosphorylated autoinducer-2 (phospho-AI-2), LsrR is inactivated, leading to the transcription of the genes. The protein is Transcriptional regulator LsrR (lsrR) of Escherichia coli O139:H28 (strain E24377A / ETEC).